The sequence spans 98 residues: Ig heavy chain V region 6.96 (98 aa).

Residues 1-98 (EVQLVESGGG…EDTAMYYCAR (98 aa)) form the Ig-like domain.

The chain is Ig heavy chain V region 6.96 from Mus musculus (Mouse).